Here is a 635-residue protein sequence, read N- to C-terminus: Chaperone protein HtpG (635 aa).

The tract at residues 1 to 344 is a; substrate-binding; sequence MSETATTNKE…SNDLPLNVSR (344 aa). The interval 345–561 is b; the sequence is EILQDNKITQ…DYEMGTQMAK (217 aa). The segment at 562–635 is c; the sequence is LLAAAGQPVP…AVNQLLAPSH (74 aa).

This sequence belongs to the heat shock protein 90 family. Homodimer.

Its subcellular location is the cytoplasm. In terms of biological role, molecular chaperone. Has ATPase activity. The chain is Chaperone protein HtpG from Vibrio cholerae serotype O1 (strain ATCC 39541 / Classical Ogawa 395 / O395).